We begin with the raw amino-acid sequence, 243 residues long: HTH-type transcriptional regulator MlrA (243 aa).

One can recognise an HTH merR-type domain in the interval 3-72; that stretch reads LYTIGEVALL…VSKVKVLLSS (70 aa). A DNA-binding region (H-T-H motif) is located at residues 6–25; it reads IGEVALLCDINPVTLRAWQR.

In terms of biological role, transcriptional activator of csgD, which is required for production of the curli (AgF). In Salmonella typhimurium (strain SL1344), this protein is HTH-type transcriptional regulator MlrA.